The chain runs to 486 residues: ATP-dependent 6-phosphofructokinase (486 aa).

ATP-binding positions include Gly105, 171-172 (RG), and 196-199 (GDGT). Asp197 contributes to the Mg(2+) binding site. Substrate is bound by residues 225–227 (TID), 270–272 (MGR), Glu323, and 378–381 (YMIR). Asp227 serves as the catalytic Proton acceptor. The Peroxisomal targeting signal signature appears at 484–486 (SKV).

Belongs to the phosphofructokinase type A (PFKA) family. PPi-dependent PFK group II subfamily. Atypical ATP-dependent clade 'X' sub-subfamily. Homotetramer. It depends on Mg(2+) as a cofactor.

It localises to the glycosome. It catalyses the reaction beta-D-fructose 6-phosphate + ATP = beta-D-fructose 1,6-bisphosphate + ADP + H(+). Its pathway is carbohydrate degradation; glycolysis; D-glyceraldehyde 3-phosphate and glycerone phosphate from D-glucose: step 3/4. Allosterically activated by AMP. Functionally, catalyzes the phosphorylation of D-fructose 6-phosphate to fructose 1,6-bisphosphate by ATP, the first committing step of glycolysis. This is ATP-dependent 6-phosphofructokinase from Leishmania donovani.